Reading from the N-terminus, the 85-residue chain is Small ribosomal subunit protein bS16c (85 aa).

This sequence belongs to the bacterial ribosomal protein bS16 family.

It is found in the plastid. Its subcellular location is the chloroplast. The protein is Small ribosomal subunit protein bS16c of Agrostis stolonifera (Creeping bentgrass).